We begin with the raw amino-acid sequence, 1044 residues long: Sarcoplasmic/endoplasmic reticulum calcium ATPase 2 (1044 aa).

The Cytoplasmic portion of the chain corresponds to 1 to 48 (MENAHTKTVEEVLGHFGVNESTGLSLEQVKKLKERWGSNELPAEEGKT). Residue Ser-38 is modified to Phosphoserine. Residues 49–69 (LLELVIEQFEDLLVRILLLAA) traverse the membrane as a helical segment. The Lumenal segment spans residues 70–89 (CISFVLAWFEEGEETITAFV). Residues 90 to 110 (EPFVILLILVANAIVGVWQER) form a helical membrane-spanning segment. Over 111 to 253 (NAENAIEALK…QERTPLQQKL (143 aa)) the chain is Cytoplasmic. The chain crosses the membrane as a helical span at residues 254–273 (DEFGEQLSKVISLICIAVWI). The Lumenal segment spans residues 274-295 (INIGHFNDPVHGGSWIRGAIYY). A 3'-nitrotyrosine mark is found at Tyr-294 and Tyr-295. Residues 296-313 (FKIAVALAVAAIPEGLPA) traverse the membrane as a helical segment. Residues Val-304, Ala-305, Ile-307, and Glu-309 each coordinate Ca(2+). Topologically, residues 314–756 (VITTCLALGT…EEGRAIYNNM (443 aa)) are cytoplasmic. The active-site 4-aspartylphosphate intermediate is Asp-351. 2 residues coordinate Mg(2+): Asp-351 and Thr-353. Thr-353 contributes to the ATP binding site. Position 441 is a phosphothreonine (Thr-441). 3 residues coordinate ATP: Glu-442, Arg-489, and Lys-514. Residue Ser-531 is modified to Phosphoserine. Arg-559 contacts ATP. The interaction with HAX1 stretch occupies residues 575-594 (MHLEDSANFIKYETNLTFVG). Ser-580 carries the post-translational modification Phosphoserine. ATP contacts are provided by Thr-624, Gly-625, and Asp-626. 2 positions are modified to phosphoserine: Ser-661 and Ser-663. Residues Arg-677 and Lys-683 each coordinate ATP. Asp-702 contributes to the Mg(2+) binding site. Residue Asn-705 participates in ATP binding. Residues 757–776 (KQFIRYLISSNVGEVVCIFL) traverse the membrane as a helical segment. The Ca(2+) site is built by Asn-767 and Glu-770. The Lumenal segment spans residues 777–786 (TAALGFPEAL). The helical transmembrane segment at 787–807 (IPVQLLWVNLVTDGLPATALG) threads the bilayer. The tract at residues 787-807 (IPVQLLWVNLVTDGLPATALG) is interaction with PLN. An interaction with TMEM64 and PDIA3 region spans residues 788 to 1044 (PVQLLWVNLV…DTNFSDMFWS (257 aa)). Residues Asn-795, Thr-798, and Asp-799 each contribute to the Ca(2+) site. Residues 808-827 (FNPPDLDIMNKPPRNPKEPL) are Cytoplasmic-facing. Residues 828-850 (ISGWLFFRYLAIGCYVGAATVGA) form a helical membrane-spanning segment. The Lumenal segment spans residues 851 to 896 (AAWWFIAADGGPRVSFYQLSHFLQCKEDNPDFDGVDCAIFESPYPM). Cys-875 and Cys-887 are joined by a disulfide. A helical transmembrane segment spans residues 897–916 (TMALSVLVTIEMCNALNSLS). Glu-907 is a binding site for Ca(2+). Topologically, residues 917–929 (ENQSLLRMPPWEN) are cytoplasmic. The chain crosses the membrane as a helical span at residues 930–948 (IWLVGSICLSMSLHFLILY). An interaction with PLN region spans residues 931–942 (WLVGSICLSMSL). At 949 to 963 (VEPLPLIFQITPLNL) the chain is on the lumenal side. The helical transmembrane segment at 964 to 984 (TQWLMVLKISLPVILMDETLK) threads the bilayer. Over 985–1044 (FVARNYLEQPGKECVQPATKSSCSLSACTDGISWPFVLLIMPLVVWVYSTDTNFSDMFWS) the chain is Cytoplasmic.

It belongs to the cation transport ATPase (P-type) (TC 3.A.3) family. Type IIA subfamily. In terms of assembly, interacts with sarcolipin (SLN); the interaction inhibits ATP2A2 Ca(2+) affinity. Interacts with phospholamban (PLN); the interaction inhibits ATP2A2 Ca(2+) affinity. Interacts with myoregulin (MRLN). Interacts with ARLN and ERLN; the interactions inhibit ATP2A2 Ca(2+) affinity. Interacts with STRIT1/DWORF; the interaction results in activation of ATP2A2. Interacts with the monomeric forms of SLN, PLN, ARLN, ERLN and STRI1/DWORF. Interacts with HAX1. Interacts with S100A8 and S100A9. Interacts with SLC35G1 and STIM1. Interacts with TMEM203. Interacts with TMEM64 and PDIA3. Interacts with TMX1. Interacts with TMX2. Interacts with VMP1; VMP1 competes with PLN and SLN to prevent them from forming an inhibitory complex with ATP2A2. Interacts with ULK1. Interacts with S100A1 in a Ca(2+)-dependent manner. Interacts with TUNAR. Interacts with FLVCR2; this interaction occurs in the absence of heme and promotes ATP2A2 proteasomal degradation; this complex is dissociated upon heme binding. Interacts with FNIP1. As to quaternary structure, interacts with TRAM2 (via C-terminus). Requires Mg(2+) as cofactor. Post-translationally, nitrated under oxidative stress. Nitration on the two tyrosine residues inhibits catalytic activity. Serotonylated on Gln residues by TGM2 in response to hypoxia, leading to its inactivation. As to expression, isoform 2 is highly expressed in heart and slow twitch skeletal muscle. Isoform 2 is widely expressed.

Its subcellular location is the endoplasmic reticulum membrane. It localises to the sarcoplasmic reticulum membrane. The catalysed reaction is Ca(2+)(in) + ATP + H2O = Ca(2+)(out) + ADP + phosphate + H(+). With respect to regulation, has different conformational states with differential Ca2+ affinity. The E1 conformational state (active form) shows high Ca(2+) affinity, while the E2 state exhibits low Ca(2+) affinity. Binding of ATP allosterically increases its affinity for subsequent binding of Ca2+. Reversibly inhibited by phospholamban (PLN) at low calcium concentrations. PLN inhibits ATP2A2 Ca(2+) affinity by disrupting its allosteric activation by ATP. Inhibited by sarcolipin (SLN) and myoregulin (MRLN). The inhibition is blocked by VMP1. Enhanced by STRIT1/DWORF; STRIT1 increases activity by displacing sarcolipin (SLN), phospholamban (PLN) and myoregulin (MRLN). Stabilizes SERCA2 in its E2 state. This magnesium-dependent enzyme catalyzes the hydrolysis of ATP coupled with the translocation of calcium from the cytosol to the sarcoplasmic reticulum lumen. Involved in autophagy in response to starvation. Upon interaction with VMP1 and activation, controls ER-isolation membrane contacts for autophagosome formation. Also modulates ER contacts with lipid droplets, mitochondria and endosomes. In coordination with FLVCR2 mediates heme-stimulated switching from mitochondrial ATP synthesis to thermogenesis. Its function is as follows. Involved in the regulation of the contraction/relaxation cycle. Acts as a regulator of TNFSF11-mediated Ca(2+) signaling pathways via its interaction with TMEM64 which is critical for the TNFSF11-induced CREB1 activation and mitochondrial ROS generation necessary for proper osteoclast generation. Association between TMEM64 and SERCA2 in the ER leads to cytosolic Ca(2+) spiking for activation of NFATC1 and production of mitochondrial ROS, thereby triggering Ca(2+) signaling cascades that promote osteoclast differentiation and activation. This Mus musculus (Mouse) protein is Sarcoplasmic/endoplasmic reticulum calcium ATPase 2.